We begin with the raw amino-acid sequence, 233 residues long: Phosducin-like protein C2A9.09 (233 aa).

The Phosducin domain maps to 58-212; the sequence is EDEEDDEFLQ…DIAALKDPQN (155 aa). A thioredoxin fold region spans residues 86 to 233; sequence FGSVYPISKP…VNDDLDDDFD (148 aa). A disordered region spans residues 207–233; it reads LKDPQNAEDELGKRDSSVNDDLDDDFD. Serine 222 and serine 223 each carry phosphoserine. Acidic residues predominate over residues 224-233; it reads VNDDLDDDFD.

Belongs to the phosducin family.

In Schizosaccharomyces pombe (strain 972 / ATCC 24843) (Fission yeast), this protein is Phosducin-like protein C2A9.09.